The primary structure comprises 278 residues: Diaminopimelate epimerase (278 aa).

3 residues coordinate substrate: N13, Q46, and N67. The active-site Proton donor is C76. Substrate-binding positions include 77 to 78 (GN), N160, N193, and 211 to 212 (ER). C220 acts as the Proton acceptor in catalysis. 221 to 222 (GT) provides a ligand contact to substrate.

This sequence belongs to the diaminopimelate epimerase family. As to quaternary structure, homodimer.

Its subcellular location is the cytoplasm. The catalysed reaction is (2S,6S)-2,6-diaminopimelate = meso-2,6-diaminopimelate. Its pathway is amino-acid biosynthesis; L-lysine biosynthesis via DAP pathway; DL-2,6-diaminopimelate from LL-2,6-diaminopimelate: step 1/1. In terms of biological role, catalyzes the stereoinversion of LL-2,6-diaminopimelate (L,L-DAP) to meso-diaminopimelate (meso-DAP), a precursor of L-lysine and an essential component of the bacterial peptidoglycan. This Thioalkalivibrio sulfidiphilus (strain HL-EbGR7) protein is Diaminopimelate epimerase.